The sequence spans 302 residues: Zinc import ATP-binding protein ZnuC (302 aa).

The 216-residue stretch at 13–228 (VSLANAGVRR…PEYLKLFGRR (216 aa)) folds into the ABC transporter domain. ATP is bound at residue 45 to 52 (GPNGSGKS).

This sequence belongs to the ABC transporter superfamily. Zinc importer (TC 3.A.1.15.5) family. The complex is composed of two ATP-binding proteins (ZnuC), two transmembrane proteins (ZnuB) and a solute-binding protein (ZnuA).

The protein resides in the cell inner membrane. It carries out the reaction Zn(2+)(out) + ATP(in) + H2O(in) = Zn(2+)(in) + ADP(in) + phosphate(in) + H(+)(in). In terms of biological role, part of the ABC transporter complex ZnuABC involved in zinc import. Responsible for energy coupling to the transport system. This Rhizobium meliloti (strain 1021) (Ensifer meliloti) protein is Zinc import ATP-binding protein ZnuC.